The following is a 707-amino-acid chain: DCC-interacting protein 13-alpha (707 aa).

Residues 1 to 428 (MPGIDKLPIE…PPTARTSSSG (428 aa)) are required for RAB5A binding. The BAR domain maps to 3 to 268 (GIDKLPIEET…DPLYLPDPDP (266 aa)). Positions 234–257 (QNVRREMDGDVETMQQTIEDLEVA) form a coiled coil. In terms of domain architecture, PH spans 277–375 (LTRKAGYLNA…WICTINNISK (99 aa)). Disordered stretches follow at residues 397–433 (AVTPSPSFQQRHESLRPGGQSRPPTARTSSSGSLGSE), 466–490 (GQAKAFGQGGRRTNPFGESGGSTKS), and 636–707 (EKQK…ESEA). Threonine 399 is subject to Phosphothreonine. Residue serine 401 is modified to Phosphoserine. Positions 403 to 414 (SFQQRHESLRPG) match the F&amp;H motif. The residue at position 410 (serine 410) is a Phosphoserine; by PKA. In terms of domain architecture, PID spans 495 to 655 (SILHQLFIVR…EKQQKELSKQ (161 aa)). A coiled-coil region spans residues 620–670 (LAKQIALHAELDRRASEKQKEIERVKEKQQKELSKQKQIEKDLEEQSRLIA). Over residues 636-666 (EKQKEIERVKEKQQKELSKQKQIEKDLEEQS) the composition is skewed to basic and acidic residues. A compositionally biased stretch (low complexity) spans 679–691 (GSEGQLVLSSSQS). Serine 691 and serine 694 each carry phosphoserine. Residues 698–707 (EEGKKRESEA) show a composition bias toward basic and acidic residues.

Homodimer. Binds RAB5A/Rab5 through an N-terminal domain. This interaction is essential for its recruitment to endosomal membranes as well as its role in cell proliferation. Binds DCC and the catalytic domain of the inactive form of AKT2 through its PID domain. Binds PIK3CA and subunits of the NuRD/MeCP1 complex. Interacts with OCRL and INPP5B. Interacts with NTRK2. Interacts with APPL2; interaction is independent of follicle stimulating hormone stimulation; interaction is decreased by adiponectin in a time-dependent manner. Forms a complex with APPL2 and RUVBL2. Forms a complex comprising APPL2, RUVBL2, CTNNB1, HDAC1 and HDAC2; interaction reduces interaction between CTNNB1, HDAC1, HDAC2 and RUVBL2 leading to the decrease of deacetylase activity of this complex; affects the recruitment of repressive complexes to the Wnt target genes. Interacts with ANXA2. Interacts with TGFBR1; interaction is TGF beta dependent; mediates trafficking of the TGFBR1 from the endosomes to the nucleus via microtubules in a TRAF6-dependent manner. Interacts with PRKCZ. Interacts with PIK3R1 and APPL2. Interacts with ADIPOR1; ADIPOQ enhances this interaction; inhibites adiponectin-stimulated binding of APPL2 to ADIPOR1. Phosphorylation at Ser-410 by PKA severely impairs binding to OCRL. In terms of tissue distribution, expressed in insulin-target tissues including skeletal muscle, liver, fat, and brain.

It localises to the early endosome membrane. Its subcellular location is the nucleus. The protein localises to the cytoplasm. The protein resides in the endosome. It is found in the cell projection. It localises to the ruffle. Its subcellular location is the cytoplasmic vesicle. The protein localises to the phagosome. Multifunctional adapter protein that binds to various membrane receptors, nuclear factors and signaling proteins to regulate many processes, such as cell proliferation, immune response, endosomal trafficking and cell metabolism. Regulates signaling pathway leading to cell proliferation through interaction with RAB5A and subunits of the NuRD/MeCP1 complex. Functions as a positive regulator of innate immune response via activation of AKT1 signaling pathway by forming a complex with APPL1 and PIK3R1. Inhibits Fc-gamma receptor-mediated phagocytosis through PI3K/Akt signaling in macrophages. Regulates TLR4 signaling in activated macrophages. Involved in trafficking of the TGFBR1 from the endosomes to the nucleus via microtubules in a TRAF6-dependent manner. Plays a role in cell metabolism by regulating adiponecting and insulin signaling pathways. Required for fibroblast migration through HGF cell signaling. Positive regulator of beta-catenin/TCF-dependent transcription through direct interaction with RUVBL2/reptin resulting in the relief of RUVBL2-mediated repression of beta-catenin/TCF target genes by modulating the interactions within the beta-catenin-reptin-HDAC complex. The polypeptide is DCC-interacting protein 13-alpha (Mus musculus (Mouse)).